Here is a 129-residue protein sequence, read N- to C-terminus: MDLDIKEIVKNMDLKFRNIEGKKLLLAISTDKSGKVLMTAFMSEESLEKSIETGFMHYYSTSRDKLWRKGEESGNVQKIINVFRDCDGDALLFTVEQTGWACHEGYMSCFHNKIDLSTGKSTVVGNKLD.

Asp85 lines the Mg(2+) pocket. Residue Cys86 participates in Zn(2+) binding. Residues Asp87 and Asp89 each coordinate Mg(2+). Cys102 and Cys109 together coordinate Zn(2+).

It belongs to the PRA-CH family. Homodimer. Mg(2+) serves as cofactor. It depends on Zn(2+) as a cofactor.

The protein localises to the cytoplasm. It carries out the reaction 1-(5-phospho-beta-D-ribosyl)-5'-AMP + H2O = 1-(5-phospho-beta-D-ribosyl)-5-[(5-phospho-beta-D-ribosylamino)methylideneamino]imidazole-4-carboxamide. It participates in amino-acid biosynthesis; L-histidine biosynthesis; L-histidine from 5-phospho-alpha-D-ribose 1-diphosphate: step 3/9. In terms of biological role, catalyzes the hydrolysis of the adenine ring of phosphoribosyl-AMP. The polypeptide is Phosphoribosyl-AMP cyclohydrolase (Methanococcus maripaludis (strain C5 / ATCC BAA-1333)).